Reading from the N-terminus, the 156-residue chain is MSAVLDTPVAIRRTAMDLLARREHGRVELTRKLRQRGASDELIEPELDRLAEEGLLSEARYLESFIRYRSGSGYGPSRIREELGQRGLARADIEQALRESEVDWRERMHDVWQRKFAGQRPQDPRSRAQQTRFLAYRGFPMDMIGRLLSGRDLDDY.

It belongs to the RecX family.

It is found in the cytoplasm. Functionally, modulates RecA activity. The polypeptide is Regulatory protein RecX (Pseudomonas putida (strain GB-1)).